The following is a 410-amino-acid chain: MGSSVYITVELAIAVLAILGNVLVCWAVWINSNLQNVTNFFVVSLAAADIAVGVLAIPFAITISTGFCAACHGCLFFACFVLVLTQSSIFSLLAIAIDRYIAIRIPLRYNGLVTGVRAKGIIAICWVLSFAIGLTPMLGWNNCSQKDGNSTKTCGEGRVTCLFEDVVPMNYMVYYNFFAFVLLPLLLMLAIYLRIFLAARRQLKQMESQPLPGERTRSTLQKEVHAAKSLAIIVGLFALCWLPLHIINCFTFFCSTCRHAPPWLMYLAIILSHSNSVVNPFIYAYRIREFRQTFRKIIRTHVLRRQEPFQAGGSSAWALAAHSTEGEQVSLRLNGHPLGVWANGSATHSGRRPNGYTLGLGGGGSAQGSPRDVELPTQERQEGQEHPGLRGHLVQARVGASSWSSEFAPS.

At 1-4 the chain is on the extracellular side; the sequence is MGSS. A helical membrane pass occupies residues 5–29; the sequence is VYITVELAIAVLAILGNVLVCWAVW. The Cytoplasmic portion of the chain corresponds to 30–39; it reads INSNLQNVTN. Residues 40 to 63 traverse the membrane as a helical segment; it reads FFVVSLAAADIAVGVLAIPFAITI. Residues 64 to 74 are Extracellular-facing; it reads STGFCAACHGC. Disulfide bonds link Cys-68–Cys-154, Cys-71–Cys-143, and Cys-74–Cys-161. A helical membrane pass occupies residues 75 to 97; sequence LFFACFVLVLTQSSIFSLLAIAI. Residues 98-117 are Cytoplasmic-facing; it reads DRYIAIRIPLRYNGLVTGVR. A helical transmembrane segment spans residues 118 to 140; the sequence is AKGIIAICWVLSFAIGLTPMLGW. The Extracellular portion of the chain corresponds to 141–168; the sequence is NNCSQKDGNSTKTCGEGRVTCLFEDVVP. Residues Asn-142 and Asn-149 are each glycosylated (N-linked (GlcNAc...) asparagine). Glu-164 provides a ligand contact to adenosine. A helical membrane pass occupies residues 169 to 193; sequence MNYMVYYNFFAFVLLPLLLMLAIYL. At 194 to 229 the chain is on the cytoplasmic side; that stretch reads RIFLAARRQLKQMESQPLPGERTRSTLQKEVHAAKS. Residues 230 to 253 traverse the membrane as a helical segment; the sequence is LAIIVGLFALCWLPLHIINCFTFF. Adenosine is bound at residue Asn-248. Cys-254 and Cys-257 are joined by a disulfide. At 254–261 the chain is on the extracellular side; that stretch reads CSTCRHAP. A helical transmembrane segment spans residues 262-285; the sequence is PWLMYLAIILSHSNSVVNPFIYAY. Positions 272 and 273 each coordinate adenosine. Residues 286–410 lie on the Cytoplasmic side of the membrane; sequence RIREFRQTFR…SSWSSEFAPS (125 aa). Residues 322–410 form an interaction with GAS2L2 region; the sequence is HSTEGEQVSL…SSWSSEFAPS (89 aa). Residues 344–410 form a disordered region; it reads GSATHSGRRP…SSWSSEFAPS (67 aa). A compositionally biased stretch (basic and acidic residues) spans 371-388; sequence RDVELPTQERQEGQEHPG. The span at 401-410 shows a compositional bias: polar residues; sequence SSWSSEFAPS.

The protein belongs to the G-protein coupled receptor 1 family. In terms of assembly, interacts (via cytoplasmic C-terminal domain) with USP4; the interaction is direct. May interact with DRD4. Interacts with NECAB2. Interacts (via cytoplasmic C-terminal domain) with GAS2L2; interaction enhances receptor-mediated adenylyl cyclase activity. Ubiquitinated. Deubiquitinated by USP4; leading to stabilization and expression at the cell surface. Expressed in striatal neurons (at protein level).

The protein resides in the cell membrane. Functionally, receptor for adenosine. The activity of this receptor is mediated by G proteins which activate adenylyl cyclase. The chain is Adenosine receptor A2a (Adora2a) from Rattus norvegicus (Rat).